Here is a 635-residue protein sequence, read N- to C-terminus: Chaperone protein DnaK (635 aa).

Phosphothreonine; by autocatalysis is present on Thr-198. The tract at residues 598–635 is disordered; that stretch reads YAKAQPGEEQAGGAPHEGEAKDEKVVDADFEEVKEDKK. Residues 613 to 624 show a composition bias toward basic and acidic residues; it reads HEGEAKDEKVVD. The span at 625–635 shows a compositional bias: acidic residues; it reads ADFEEVKEDKK.

This sequence belongs to the heat shock protein 70 family.

In terms of biological role, acts as a chaperone. This chain is Chaperone protein DnaK, found in Geotalea uraniireducens (strain Rf4) (Geobacter uraniireducens).